The sequence spans 736 residues: Polyribonucleotide nucleotidyltransferase (736 aa).

2 residues coordinate Mg(2+): D518 and D524. Residues P584–I644 enclose the KH domain. In terms of domain architecture, S1 motif spans G665–A732.

The protein belongs to the polyribonucleotide nucleotidyltransferase family. Mg(2+) is required as a cofactor.

It localises to the cytoplasm. It catalyses the reaction RNA(n+1) + phosphate = RNA(n) + a ribonucleoside 5'-diphosphate. Functionally, involved in mRNA degradation. Catalyzes the phosphorolysis of single-stranded polyribonucleotides processively in the 3'- to 5'-direction. This Wolinella succinogenes (strain ATCC 29543 / DSM 1740 / CCUG 13145 / JCM 31913 / LMG 7466 / NCTC 11488 / FDC 602W) (Vibrio succinogenes) protein is Polyribonucleotide nucleotidyltransferase.